We begin with the raw amino-acid sequence, 230 residues long: Large ribosomal subunit protein uL1 (230 aa).

It belongs to the universal ribosomal protein uL1 family. In terms of assembly, part of the 50S ribosomal subunit.

Functionally, binds directly to 23S rRNA. The L1 stalk is quite mobile in the ribosome, and is involved in E site tRNA release. In terms of biological role, protein L1 is also a translational repressor protein, it controls the translation of the L11 operon by binding to its mRNA. This Oenococcus oeni (strain ATCC BAA-331 / PSU-1) protein is Large ribosomal subunit protein uL1.